Consider the following 519-residue polypeptide: Anthranilate synthase component 1 (519 aa).

Residues T40 and 293–295 (PYM) each bind L-tryptophan. 330 to 331 (GT) is a chorismate binding site. A Mg(2+)-binding site is contributed by E363. Residues Y451, R471, 485-487 (GSG), and G487 contribute to the chorismate site. E500 serves as a coordination point for Mg(2+).

Belongs to the anthranilate synthase component I family. As to quaternary structure, heterotetramer consisting of two non-identical subunits: a beta subunit (TrpG) and a large alpha subunit (TrpE). The cofactor is Mg(2+).

The enzyme catalyses chorismate + L-glutamine = anthranilate + pyruvate + L-glutamate + H(+). The protein operates within amino-acid biosynthesis; L-tryptophan biosynthesis; L-tryptophan from chorismate: step 1/5. With respect to regulation, feedback inhibited by tryptophan. In terms of biological role, part of a heterotetrameric complex that catalyzes the two-step biosynthesis of anthranilate, an intermediate in the biosynthesis of L-tryptophan. In the first step, the glutamine-binding beta subunit (TrpG) of anthranilate synthase (AS) provides the glutamine amidotransferase activity which generates ammonia as a substrate that, along with chorismate, is used in the second step, catalyzed by the large alpha subunit of AS (TrpE) to produce anthranilate. In the absence of TrpG, TrpE can synthesize anthranilate directly from chorismate and high concentrations of ammonia. The polypeptide is Anthranilate synthase component 1 (trpE) (Buchnera aphidicola subsp. Diuraphis noxia).